The chain runs to 259 residues: Sphinganine C4-monooxygenase 2 (259 aa).

3 consecutive transmembrane segments (helical) span residues 10 to 30 (FLGTFVPILVYWVYSGMYICL), 54 to 74 (AVVKGVLLQQTLQAIISVILF), and 91 to 111 (ILLLARQFIIAMLVIDTWQYF). Residues 98–234 (FIIAMLVIDT…FVMWDRILGT (137 aa)) enclose the Fatty acid hydroxylase domain. The Histidine box-1 motif lies at 113–117 (HRYMH). The short motif at 127–131 (HSQHH) is the Histidine box-2 element. Residues 206-212 (YHDVHHQ) carry the Histidine box-3 motif.

It belongs to the sterol desaturase family. The cofactor is Fe cation. Ubiquitous, with higher levels in flowers and roots.

The protein localises to the endoplasmic reticulum membrane. The catalysed reaction is a dihydroceramide + 2 Fe(II)-[cytochrome b5] + O2 + 2 H(+) = a phytoceramide + 2 Fe(III)-[cytochrome b5] + H2O. It participates in membrane lipid metabolism; sphingolipid biosynthesis. Involved in sphingolipid trihydroxy long-chain base (4-hydroxysphinganine) biosynthesis. Can use C18- and C20-sphinganine as substrates to produce C18- and C20-phytosphinganines (D-ribo-2-amino-1,3,4-trihydroxyoctadecane and -eicosane). The protein is Sphinganine C4-monooxygenase 2 (SBH2) of Arabidopsis thaliana (Mouse-ear cress).